Consider the following 241-residue polypeptide: Probable transcriptional regulator PhnF (241 aa).

The 68-residue stretch at 11-78 (PTRYQEIAAK…QGVGVLVLMR (68 aa)) folds into the HTH gntR-type domain. The segment at residues 38-57 (EQQLAARFEVNRHTLRRAID) is a DNA-binding region (H-T-H motif).

Belongs to an operon involved in alkylphosphonate uptake and C-P lyase. Exact function not known. By similarity could be a transcriptional regulator. This is Probable transcriptional regulator PhnF (phnF) from Escherichia coli (strain K12).